A 469-amino-acid chain; its full sequence is Cytoplasmic tRNA 2-thiolation protein 2 (469 aa).

It belongs to the CTU2/NCS2 family.

It is found in the cytoplasm. The protein operates within tRNA modification; 5-methoxycarbonylmethyl-2-thiouridine-tRNA biosynthesis. In terms of biological role, plays a central role in 2-thiolation of mcm(5)S(2)U at tRNA wobble positions of tRNA(Lys), tRNA(Glu) and tRNA(Gln). May act by forming a heterodimer with NCS6 that ligates sulfur from thiocarboxylated URM1 onto the uridine of tRNAs at wobble position. Prior mcm(5) tRNA modification by the elongator complex is required for 2-thiolation. May also be involved in protein urmylation. The protein is Cytoplasmic tRNA 2-thiolation protein 2 of Candida glabrata (strain ATCC 2001 / BCRC 20586 / JCM 3761 / NBRC 0622 / NRRL Y-65 / CBS 138) (Yeast).